The primary structure comprises 253 residues: Ubiquinone biosynthesis O-methyltransferase (253 aa).

Residues R47, G78, D99, and M141 each contribute to the S-adenosyl-L-methionine site.

It belongs to the methyltransferase superfamily. UbiG/COQ3 family.

It carries out the reaction a 3-demethylubiquinol + S-adenosyl-L-methionine = a ubiquinol + S-adenosyl-L-homocysteine + H(+). The enzyme catalyses a 3-(all-trans-polyprenyl)benzene-1,2-diol + S-adenosyl-L-methionine = a 2-methoxy-6-(all-trans-polyprenyl)phenol + S-adenosyl-L-homocysteine + H(+). Its pathway is cofactor biosynthesis; ubiquinone biosynthesis. Functionally, O-methyltransferase that catalyzes the 2 O-methylation steps in the ubiquinone biosynthetic pathway. This Rhodopseudomonas palustris (strain ATCC BAA-98 / CGA009) protein is Ubiquinone biosynthesis O-methyltransferase.